Consider the following 3961-residue polypeptide: Replicase polyprotein 1ab (3961 aa).

The segment at 8 to 28 adopts a C4-type; atypical zinc-finger fold; the sequence is CTCTPNARVFVAEGQVYCTRC. Positions 69–180 constitute a Peptidase C31 domain; that stretch reads ECSPTGACWL…EDFCPFECAM (112 aa). A PCP1-alpha region spans residues 69–182; it reads ECSPTGACWL…FCPFECAMAD (114 aa). Residues C76 and H146 each act as for Nsp1-alpha papain-like cysteine proteinase activity in the active site. The tract at residues 199–200 is important for host EIF2AK2 inhibition; it reads VS. Positions 263 to 382 are PCP1-beta; sequence DTVPEGNCWW…IFRFGSHKWY (120 aa). Residues 263–383 form the Peptidase C32 domain; that stretch reads DTVPEGNCWW…FRFGSHKWYG (121 aa). Active-site for Nsp1-beta papain-like cysteine proteinase activity residues include C270 and H339. The tract at residues 426–513 is OTU-like; the sequence is LKLYSPPAEG…GEHWTVSVNP (88 aa). The 108-residue stretch at 428-535 folds into the Peptidase C33 domain; the sequence is LYSPPAEGNC…QGCCEHKGGL (108 aa). Residues C437 and H506 each act as for Nsp2 cysteine proteinase activity in the active site. Positions 810-819 are enriched in pro residues; it reads WTPPPPPPRV. 3 disordered regions span residues 810 to 875, 899 to 918, and 1148 to 1191; these read WTPP…FPTP, TPLD…SRPM, and TGEL…PADT. The next 7 helical transmembrane spans lie at 1266-1286, 1296-1316, 1368-1388, 1583-1603, 1648-1668, 1685-1705, and 1719-1739; these read FCLF…LGVF, GVFG…SDPV, VWHF…GAYV, LVAA…GVYV, LTAL…LIFV, CILL…LCVF, and ILWL…LAVV. The tract at residues 1266–1388 is HD1; it reads FCLFLCYSYP…ADCILAGAYV (123 aa). Residues 1583 to 1745 form an HD2 region; that stretch reads LVAALHVACS…LAVVLLVSLW (163 aa). A Peptidase S32 domain is found at 1810-2013; sequence GAFRTQKPSL…ALLAAKPELE (204 aa). Residues H1848, D1873, and S1927 each act as charge relay system; for 3C-like serine proteinase activity in the active site. A run of 5 helical transmembrane segments spans residues 2036-2056, 2060-2080, 2092-2112, 2137-2157, and 2162-2182; these read WTPL…AVLV, FSFG…VLMI, LSLG…LAVT, SPVP…LYLF, and LHYV…RYFA. Residues 2036–2157 form an HD3 region; it reads WTPLVAVGFF…HLLAIILYLF (122 aa). The region spanning 2488-2651 is the NiRAN domain; that stretch reads IIDKLQGLTK…LPYKLYPVRG (164 aa). The RdRp catalytic domain maps to 2890-3024; sequence GRCLEADLAS…YAESPSMPNY (135 aa). Positions 3145–3208 constitute an AV ZBD domain; sequence GKKSRMCGYC…PPLGKGTSPL (64 aa). 12 residues coordinate Zn(2+): C3151, C3154, C3164, C3169, H3172, H3174, H3176, H3178, C3185, H3187, C3194, and C3197. The (+)RNA virus helicase ATP-binding domain occupies 3265 to 3417; that stretch reads ASTALLPTCK…VFDIMPQTQL (153 aa). Residue 3293–3300 participates in ATP binding; sequence GPPGAGKT. One can recognise a (+)RNA virus helicase C-terminal domain in the interval 3418 to 3546; the sequence is KTIWRFGQNI…AVHRDEQLIV (129 aa). An AV-Nsp11N/CoV-Nsp15M domain is found at 3585–3681; the sequence is EGSSSPLPKV…LTKFVRGEAQ (97 aa). In terms of domain architecture, NendoU spans 3683 to 3805; sequence LPETVFSTGR…MVWKGKTAYF (123 aa). Active-site residues include H3714, H3729, and K3758.

It belongs to the arteriviridae polyprotein family. As to quaternary structure, nsp1-alpha papain-like: Interacts with host RNF31. Interacts with host EIF2AK2; this interaction occurs in host stress granules and leads to EIF2AK2 inhibition. Interacts with host G3BP1; this interaction probably plays a role in Nsp1-beta-mediated inhibition of host EIF2AK2. In terms of assembly, interacts with host DDX18; this interaction redistributes host DDX18 to the cytoplasm. As to quaternary structure, interacts with host IFITM1. Interacts with host DDX5. In terms of assembly, interacts with host OTULIN. As to quaternary structure, interacts with host LGALS3. In terms of processing, specific enzymatic cleavages in vivo by its own proteases yield mature proteins. Nsp1 is autocleaved into two subunits, Nsp1-alpha and Nsp1-beta. There are two alternative pathways for processing. Either nsp4-5 is cleaved, which represents the major pathway or the nsp5-6 and nsp6-7 are processed, which represents the minor pathway. The major pathway occurs when nsp2 acts as a cofactor for nsp4.

The protein localises to the host nucleus. Its subcellular location is the host cytoplasm. It localises to the host membrane. It is found in the host endoplasmic reticulum. The protein resides in the host perinuclear region. It catalyses the reaction RNA(n) + a ribonucleoside 5'-triphosphate = RNA(n+1) + diphosphate. The catalysed reaction is ATP + H2O = ADP + phosphate + H(+). It carries out the reaction Thiol-dependent hydrolysis of ester, thioester, amide, peptide and isopeptide bonds formed by the C-terminal Gly of ubiquitin (a 76-residue protein attached to proteins as an intracellular targeting signal).. The enzyme catalyses uridylyl-uridylyl-ribonucleotide-RNA = a 3'-end uridylyl-2',3'-cyclophospho-uridine-RNA + a 5'-end dephospho-ribonucleoside-RNA. Its function is as follows. Contains the activities necessary for the transcription of negative stranded RNA, leader RNA, subgenomic mRNAs and progeny virion RNA as well as proteinases responsible for the cleavage of the polyprotein into functional products. Inhibits host IFN-beta production. Plays a role in the degradation of the host transcriptional activator CREBBP protein. The degradation of host CREBBP which is a key component of the IFN enhanceosome is likely responsible for the inhibition of interferon mediated by Nsp1-alpha. Also participates in the inhibition of host NF-kappa-B activation by counteracting LUBAC-dependent induction of NF-kappa-B. Reduces host NEMO ubiquitination by blocking the interaction between the two LUBAC complex components RNF31 and SHARPIN. In terms of biological role, plays a role in blocking host mRNA nuclear export to the cytoplasm and subversion of host protein synthesis. Additionally, inhibits the interferon-activated JAK/STAT signal transduction by mediating the ubiquitination and subsequent proteasomal degradation of host KPNA1. Repurposes the host antiviral stress granules into a proviral platform to counteract the EIF2AK2/PKR restriction, thereby regulating the host inflammatory response. Functionally, multifunctional protein that acts as a viral protease and as a viral antagonist of host immune response. Cleaves the nsp2/nsp3 site in the viral polyprotein. Displays deubiquitinating activity that cleaves both ubiquitinated and ISGylated products and therefore inhibits ubiquitin and ISG15-dependent host innate immunity. Also deubiquinates host NFKBIA, thereby interfering with NFKBIA degradation and impairing subsequent NF-kappa-B activation. Its function is as follows. Plays a role in the inhibition of the immune response by interacting with host IFITM1. This interaction leads to the proteasomal degradation of the IFN-induced antiviral protein IFITM1. Cleaves the majority of cleavage sites present in the C-terminus of the polyprotein. Triggers host apoptosis through caspase-3, -8, and -9 activations. Subverts host innate immune responses through its protease activity. Targets the NF-kappa-B essential modulator NEMO and mediates its cleavage. Blocks host interferon beta induction and downstream signaling by cleaving mitochondrial MAVS, dislodging it from the mitochondria. Impairs host defense by cleaving host mRNA-decapping enzyme DCP1A to attenuate its antiviral activity. In terms of biological role, plays a role in the initial induction of autophagosomes from host endoplasmic reticulum. Functionally, plays a role in the inhibition of host STAT3 signaling pathway by inducing the degradation of STAT3. Its function is as follows. Responsible for replication and transcription of the viral RNA genome. Displays RNA and DNA duplex-unwinding activities with 5' to 3' polarity. In terms of biological role, plays a role in viral transcription/replication and prevents the simultaneous activation of host cell dsRNA sensors, such as MDA5/IFIH1, OAS, PKR and NLRP3 inflammasome. Acts by degrading the 5'-polyuridines generated during replication of the poly(A) region of viral genomic and subgenomic RNAs. Catalyzes a two-step reaction in which a 2'3'-cyclic phosphate (2'3'-cP) is first generated by 2'-O transesterification, which is then hydrolyzed to a 3'-phosphate (3'-P). If not degraded, poly(U) RNA would hybridize with poly(A) RNA tails and activate host dsRNA sensors. Also plays a role in the inhibition of host type I interferon production by recruiting host OTULIN to promote removal of linear ubiquitination targeting host NEMO. The polypeptide is Replicase polyprotein 1ab (rep) (Porcine reproductive and respiratory syndrome virus (strain HB-1) (PRRSV)).